A 453-amino-acid polypeptide reads, in one-letter code: SH2 domain-containing protein 4A (453 aa).

The stretch at 96-127 (EIIAEQARREAEKEAEQLRKKQEVELSQLSTL) forms a coiled coil. The segment at 280–301 (AVKRPPIPPKPKLPPSANNSSI) is disordered. Over residues 284-293 (PPIPPKPKLP) the composition is skewed to pro residues. The 93-residue stretch at 347–439 (WFHGIISRQE…LGRELLRFPC (93 aa)) folds into the SH2 domain.

The protein resides in the cytoplasm. In terms of biological role, inhibits estrogen-induced cell proliferation. The sequence is that of SH2 domain-containing protein 4A (sh2d4a) from Xenopus tropicalis (Western clawed frog).